The sequence spans 250 residues: Precorrin-4 C(11)-methyltransferase (250 aa).

It belongs to the precorrin methyltransferase family.

It carries out the reaction precorrin-4 + S-adenosyl-L-methionine = precorrin-5 + S-adenosyl-L-homocysteine. It participates in cofactor biosynthesis; adenosylcobalamin biosynthesis; cob(II)yrinate a,c-diamide from precorrin-2 (aerobic route): step 4/10. Functionally, catalyzes the methylation of C-11 in precorrin-4 to form precorrin-5. The polypeptide is Precorrin-4 C(11)-methyltransferase (cobM) (Pseudomonas aeruginosa (strain ATCC 15692 / DSM 22644 / CIP 104116 / JCM 14847 / LMG 12228 / 1C / PRS 101 / PAO1)).